Reading from the N-terminus, the 335-residue chain is tRNA N6-adenosine threonylcarbamoyltransferase (335 aa).

Histidine 109, histidine 113, and tyrosine 130 together coordinate a divalent metal cation. Residues 130 to 134, aspartate 162, glycine 177, glutamate 181, and asparagine 266 each bind substrate; that span reads YVSGG. Aspartate 294 serves as a coordination point for a divalent metal cation.

This sequence belongs to the KAE1 / TsaD family. Component of the EKC/KEOPS complex composed of at least GON7, TP53RK, TPRKB, OSGEP and LAGE3; the whole complex dimerizes. The cofactor is a divalent metal cation.

It localises to the cytoplasm. The protein localises to the nucleus. The enzyme catalyses L-threonylcarbamoyladenylate + adenosine(37) in tRNA = N(6)-L-threonylcarbamoyladenosine(37) in tRNA + AMP + H(+). Functionally, component of the EKC/KEOPS complex that is required for the formation of a threonylcarbamoyl group on adenosine at position 37 (t(6)A37) in tRNAs that read codons beginning with adenine. The complex is probably involved in the transfer of the threonylcarbamoyl moiety of threonylcarbamoyl-AMP (TC-AMP) to the N6 group of A37. OSGEP likely plays a direct catalytic role in this reaction, but requires other protein(s) of the complex to fulfill this activity. The polypeptide is tRNA N6-adenosine threonylcarbamoyltransferase (Osgep) (Rattus norvegicus (Rat)).